A 226-amino-acid chain; its full sequence is uncharacterized protein (226 aa).

The protein belongs to the mimivirus L246/L426 family.

This is an uncharacterized protein from Acanthamoeba polyphaga mimivirus (APMV).